We begin with the raw amino-acid sequence, 244 residues long: MSQFSLSQCVSMTAEQQEQSLAEINLRLEMMDAHQRVNWALENLPGEFVLSSSFGIQAAVCLHLVTQEYPDIPVILTDTGYLFPETYQFIDKLTTQLKLNLQVFSAEHSPAWQEARYGKLWEQGVEGIERYNQINKVEPMNRALKNLRAQSWFAGLRRQQSESRSKLPVLAVQRGVFKILPIIDWDNRRVHQYLTKHGLEYHPLWEQGYLSVGDIHTTQKWEPGMSEEQTRFFGLKRECGLHEN.

The active-site Nucleophile; cysteine thiosulfonate intermediate is the Cys239.

The protein belongs to the PAPS reductase family. CysH subfamily.

It localises to the cytoplasm. It carries out the reaction [thioredoxin]-disulfide + sulfite + adenosine 3',5'-bisphosphate + 2 H(+) = [thioredoxin]-dithiol + 3'-phosphoadenylyl sulfate. The protein operates within sulfur metabolism; hydrogen sulfide biosynthesis; sulfite from sulfate: step 3/3. In terms of biological role, catalyzes the formation of sulfite from phosphoadenosine 5'-phosphosulfate (PAPS) using thioredoxin as an electron donor. The protein is Phosphoadenosine 5'-phosphosulfate reductase of Photorhabdus laumondii subsp. laumondii (strain DSM 15139 / CIP 105565 / TT01) (Photorhabdus luminescens subsp. laumondii).